A 23-amino-acid chain; its full sequence is Cysteine proteinase (23 aa).

Basic and acidic residues predominate over residues 1-10 (ADSLDWREKG). Residues 1–23 (ADSLDWREKGVVNSIKDQAQXGS) form a disordered region.

Belongs to the peptidase C1 family.

This Tritrichomonas foetus (Trichomonas foetus) protein is Cysteine proteinase.